The primary structure comprises 122 residues: S-adenosylmethionine decarboxylase proenzyme (122 aa).

Catalysis depends on Ser-61, which acts as the Schiff-base intermediate with substrate; via pyruvic acid. The residue at position 61 (Ser-61) is a Pyruvic acid (Ser); by autocatalysis. His-66 functions as the Proton acceptor; for processing activity in the catalytic mechanism. Cys-81 acts as the Proton donor; for catalytic activity in catalysis.

Belongs to the prokaryotic AdoMetDC family. Type 1 subfamily. As to quaternary structure, heterotetramer of two alpha and two beta chains arranged as a dimer of alpha/beta heterodimers. Requires pyruvate as cofactor. Is synthesized initially as an inactive proenzyme. Formation of the active enzyme involves a self-maturation process in which the active site pyruvoyl group is generated from an internal serine residue via an autocatalytic post-translational modification. Two non-identical subunits are generated from the proenzyme in this reaction, and the pyruvate is formed at the N-terminus of the alpha chain, which is derived from the carboxyl end of the proenzyme. The post-translation cleavage follows an unusual pathway, termed non-hydrolytic serinolysis, in which the side chain hydroxyl group of the serine supplies its oxygen atom to form the C-terminus of the beta chain, while the remainder of the serine residue undergoes an oxidative deamination to produce ammonia and the pyruvoyl group blocking the N-terminus of the alpha chain.

The enzyme catalyses S-adenosyl-L-methionine + H(+) = S-adenosyl 3-(methylsulfanyl)propylamine + CO2. Its pathway is amine and polyamine biosynthesis; S-adenosylmethioninamine biosynthesis; S-adenosylmethioninamine from S-adenosyl-L-methionine: step 1/1. In terms of biological role, catalyzes the decarboxylation of S-adenosylmethionine to S-adenosylmethioninamine (dcAdoMet), the propylamine donor required for the synthesis of the polyamines spermine and spermidine from the diamine putrescine. This is S-adenosylmethionine decarboxylase proenzyme from Prochlorococcus marinus (strain MIT 9211).